The sequence spans 115 residues: MRYVASYLLAALGGNTSPSAKDIKKXLDSVGIEADXDRLNKVISELNGKNIEDVIAQGIGKLASVPSGGAXAVAAAPGSXAPAAGSAPAAAEEKKEEKKEESEESDDDMGFGLFD.

An N-acetylmethionine modification is found at Met-1. 2 positions are modified to phosphoserine: Ser-17 and Ser-19. Lys-21 is subject to N6-acetyllysine; alternate. Lys-21 bears the N6-succinyllysine; alternate mark. The segment covering 69-90 has biased composition (low complexity); it reads GAXAVAAAPGSXAPAAGSAPAA. Residues 69 to 115 are disordered; it reads GAXAVAAAPGSXAPAAGSAPAAAEEKKEEKKEESEESDDDMGFGLFD. Phosphoserine occurs at positions 79 and 86. Positions 91–101 are enriched in basic and acidic residues; sequence AEEKKEEKKEE. Residues Ser-102 and Ser-105 each carry the phosphoserine modification.

This sequence belongs to the eukaryotic ribosomal protein P1/P2 family. In terms of assembly, heterodimer with RPLP1 at the lateral ribosomal stalk of the large ribosomal subunit.

Its function is as follows. Plays an important role in the elongation step of protein synthesis. In Sus scrofa (Pig), this protein is Large ribosomal subunit protein P2 (RPLP2).